A 371-amino-acid chain; its full sequence is MDFQLQAVDDNARAGLLNLAHSQVATPVFMPVGTQGCIKSLDATDAQEILGAKLILANTYHMYLRPGEKVVGQLGGLHRFAQFQGSFLTDSGGFQAFSLSGNIKLQEDGIVFKSHIDGSKHLFTPAKVLDIQYSLNSDIMMVLDDLVGLPAPLKRLEESIKRSAKWANLSLEYHKQKNRPSNNLFAIIQGGTHLKMRSLSVGLTHEGFDGYAIGGLAVGESVDEMLETIAHTAPLLPKDKPRYLMGVGTPENILDAIGLGVDMFDCVMPTRNARNATLFTYSGKISIKNAPYKLDNTPIEENCACYTCKRYSKAYLHHLFRAKELTYARLASLHNLHFYLELVKNARNAILEKRFLSFKKEFLEKYNSRSH.

Residue Asp90 is the Proton acceptor of the active site. Residues 90–94 (DSGGF), Asp144, Gln189, and Gly215 each bind substrate. An RNA binding region spans residues 246–252 (GVGTPEN). Asp265 (nucleophile) is an active-site residue. The tract at residues 270–274 (TRNAR) is RNA binding; important for wobble base 34 recognition. Zn(2+)-binding residues include Cys303, Cys305, Cys308, and His334.

It belongs to the queuine tRNA-ribosyltransferase family. As to quaternary structure, homodimer. Within each dimer, one monomer is responsible for RNA recognition and catalysis, while the other monomer binds to the replacement base PreQ1. Zn(2+) serves as cofactor.

The catalysed reaction is 7-aminomethyl-7-carbaguanine + guanosine(34) in tRNA = 7-aminomethyl-7-carbaguanosine(34) in tRNA + guanine. Its pathway is tRNA modification; tRNA-queuosine biosynthesis. Catalyzes the base-exchange of a guanine (G) residue with the queuine precursor 7-aminomethyl-7-deazaguanine (PreQ1) at position 34 (anticodon wobble position) in tRNAs with GU(N) anticodons (tRNA-Asp, -Asn, -His and -Tyr). Catalysis occurs through a double-displacement mechanism. The nucleophile active site attacks the C1' of nucleotide 34 to detach the guanine base from the RNA, forming a covalent enzyme-RNA intermediate. The proton acceptor active site deprotonates the incoming PreQ1, allowing a nucleophilic attack on the C1' of the ribose to form the product. After dissociation, two additional enzymatic reactions on the tRNA convert PreQ1 to queuine (Q), resulting in the hypermodified nucleoside queuosine (7-(((4,5-cis-dihydroxy-2-cyclopenten-1-yl)amino)methyl)-7-deazaguanosine). The chain is Queuine tRNA-ribosyltransferase from Helicobacter pylori (strain HPAG1).